Here is a 91-residue protein sequence, read N- to C-terminus: Acylphosphatase (91 aa).

Positions 5–91 (RAHLRIYGRV…EGLEGFKVVG (87 aa)) constitute an Acylphosphatase-like domain. Residues Arg20 and Asn38 contribute to the active site.

It belongs to the acylphosphatase family.

The enzyme catalyses an acyl phosphate + H2O = a carboxylate + phosphate + H(+). This is Acylphosphatase (acyP) from Thermococcus kodakarensis (strain ATCC BAA-918 / JCM 12380 / KOD1) (Pyrococcus kodakaraensis (strain KOD1)).